The chain runs to 948 residues: MAQQYQPGQRWISDSEAELGLGTILAQDGRLLTVLYPATGDTRQYSLRNAPLTRVRFSPGDQITHFEGWKLTVREVEDIDGLMVYHGLDGQNQPRTLPETQLSNFIQFRLASDRLFAGQIDPLSWFSLRYNTLQHTSKQMQSALWGLGGCRAQPIAHQLHIAREVADRSAPRVLLADEVGLGKTIEAGLVIHRQLLSGRANRVLILVPENLQHQWLVEMRRRFNLQVALFDAERFIESDASNPFEDAQLALVALEWLVDDEKAQDALFAAGWDLMVVDEAHHLVWHEDQASTEYSLVEQLAQVIPGVLLLTATPEQLGQDSHFARLRLLDPNRFHDLAAFRAESEHYRPVAEAVQELLDEGRLSPKAHATIQGFLGAEGEALLAAVNDGDTQASARLIRELLDRHGTGRVLFRNTRAAIQGFPERQLHPYPLATPEQYRDLPAGEHAELYPEVAFQAQGEAADDERWWRFDPRVDWLIDTLKMLKRTKVLVICAHAETAMDLEDALRVRSGIPASVFHEGMSILERDRAAAYFADEEFGAQVLICSEIGSEGRNFQFAHHLVMFDLPAHPDLLEQRIGRLDRIGQKHTIQLHIPYLQDSPQERLFQWYHEGLNAFLNTCPTGNALQHQFGPRLLPLLEGGESKAWDALVADARGERERLEAELHTGRDRLLELNSGGAGEGQALVEDILEQDDQFALPIYMETLFDAFGIDSEDHSENALILKPSEKMLDASFPLGDDEGVTITYDRAQALSREDMQFLTWEHPMVQGGMDLVLSGSMGNTAVALIKNKALKPGTVLLELLFVSEVVAPRSLQLGRYLPPAALRCLLDANGNDLASRVAFETLNDQLESVPRASANKFVQAQRDVLAKRISGGEEKILPIHVERVAEAQRRLAAEADEELARLVALQAVNPSVRDSEIDALRKQREDGLAMLEKAALRLEAIRVLVAG.

The Helicase ATP-binding domain maps to 164 to 332; the sequence is EVADRSAPRV…FARLRLLDPN (169 aa). ATP is bound at residue 177–184; sequence DEVGLGKT. A DEAH box motif is present at residues 278 to 281; the sequence is DEAH. The Helicase C-terminal domain occupies 473 to 627; sequence RVDWLIDTLK…TCPTGNALQH (155 aa).

The protein belongs to the SNF2/RAD54 helicase family. RapA subfamily. In terms of assembly, interacts with the RNAP. Has a higher affinity for the core RNAP than for the holoenzyme. Its ATPase activity is stimulated by binding to RNAP.

Transcription regulator that activates transcription by stimulating RNA polymerase (RNAP) recycling in case of stress conditions such as supercoiled DNA or high salt concentrations. Probably acts by releasing the RNAP, when it is trapped or immobilized on tightly supercoiled DNA. Does not activate transcription on linear DNA. Probably not involved in DNA repair. In Pseudomonas putida (strain GB-1), this protein is RNA polymerase-associated protein RapA.